The chain runs to 79 residues: Small ribosomal subunit protein uS17 (79 aa).

This sequence belongs to the universal ribosomal protein uS17 family. In terms of assembly, part of the 30S ribosomal subunit.

In terms of biological role, one of the primary rRNA binding proteins, it binds specifically to the 5'-end of 16S ribosomal RNA. This is Small ribosomal subunit protein uS17 from Orientia tsutsugamushi (strain Ikeda) (Rickettsia tsutsugamushi).